The chain runs to 49 residues: Large ribosomal subunit protein bL33 (49 aa).

This sequence belongs to the bacterial ribosomal protein bL33 family.

This is Large ribosomal subunit protein bL33 from Syntrophomonas wolfei subsp. wolfei (strain DSM 2245B / Goettingen).